We begin with the raw amino-acid sequence, 178 residues long: Protein Vhl (178 aa).

It belongs to the VHL family. In terms of assembly, part of a complex with Cul2, Roc1a/Rbx1 and the elongin BC complex. Interacts with sima/Hif1a. Interacts with itself. Interacts with mgr and betaTub56D/tubulin beta-1 chain. Interacts with tubulin alpha-beta heterodimers by itself or in complex with mgr. Interacts with microtubules (MTs).

Its pathway is protein modification; protein ubiquitination. In terms of biological role, involved in development of tracheal vasculature. Probably involved in halting cell migration at the end of vascular tube outgrowth. Possesses E3 ubiquitin ligase activity when in complex with Elongin BC complex, Cul2 and Rox1a/Rbx1, and can target sima/Hif1a for ubiquitination. May play a critical role in promoting microtubule stabilization when tubulins are correctly folded by the prefoldin complex. If tubulin is incorrectly folded, may promote its degradation. The chain is Protein Vhl from Drosophila melanogaster (Fruit fly).